Reading from the N-terminus, the 766-residue chain is Protein STB6 (766 aa).

The disordered stretch occupies residues 447-469 (VPSEQLTTSNKEDSDTQPTKRNS). Ser-514 is modified (phosphoserine).

This sequence to yeast STB2.

Functionally, binds to SIN3. This is Protein STB6 (STB6) from Saccharomyces cerevisiae (strain ATCC 204508 / S288c) (Baker's yeast).